A 696-amino-acid chain; its full sequence is Serine/threonine-protein kinase sck1 (696 aa).

Disordered stretches follow at residues 1 to 59 (MTEI…YDPV) and 77 to 118 (HKEQ…TPPS). The span at 11–37 (SSNSENTNQASPSTIQSHSTQPVLSND) shows a compositional bias: polar residues. Basic and acidic residues-rich tracts occupy residues 38-49 (HSTKVNDYEGKE) and 77-88 (HKEQSLKEDKES). One can recognise a C2 domain in the interval 122 to 272 (IRHDTVVPKD…VQEAWYKLEP (151 aa)). The Protein kinase domain occupies 302-563 (FTALRLIGKG…TTELKEHPFF (262 aa)). ATP is bound by residues 308-316 (IGKGTFGQV) and Lys-331. Residue Asp-428 is the Proton acceptor of the active site. The AGC-kinase C-terminal domain maps to 564–643 (ADINWDLLSK…VNKSIDEQFQ (80 aa)). Thr-632 is subject to Phosphothreonine. Ser-665 carries the post-translational modification Phosphoserine.

It belongs to the protein kinase superfamily. AGC Ser/Thr protein kinase family. cAMP subfamily.

The enzyme catalyses L-seryl-[protein] + ATP = O-phospho-L-seryl-[protein] + ADP + H(+). It carries out the reaction L-threonyl-[protein] + ATP = O-phospho-L-threonyl-[protein] + ADP + H(+). Its function is as follows. Protein kinase that is part of growth control pathway which is at least partially redundant with the cAMP pathway. Required for trehalase activation. The polypeptide is Serine/threonine-protein kinase sck1 (sck1) (Schizosaccharomyces pombe (strain 972 / ATCC 24843) (Fission yeast)).